The sequence spans 319 residues: Mercury resistance probable Hg transport protein (319 aa).

Residues C298, C299, C318, and C319 each coordinate Hg(2+).

In Streptomyces lividans, this protein is Mercury resistance probable Hg transport protein.